We begin with the raw amino-acid sequence, 147 residues long: Ubiquitin-like-conjugating enzyme ATG10 (147 aa).

Cys116 (glycyl thioester intermediate) is an active-site residue.

Belongs to the ATG10 family. As to quaternary structure, forms homooligomers. Interacts with ATG10. Interacts with ATG7 and ATG12.

The protein localises to the preautophagosomal structure membrane. E2-like enzyme required for the cytoplasm to vacuole transport (Cvt), autophagy and nucleophagy. Acts as an E2-like enzyme that catalyzes the conjugation of ATG12 to ATG5. ATG12 conjugation to ATG5 is required for proper localization of ATG8 to the preautophagosomal structure (PAS). Likely serves as an ATG5-recognition molecule. The protein is Ubiquitin-like-conjugating enzyme ATG10 of Kluyveromyces marxianus (strain DMKU3-1042 / BCC 29191 / NBRC 104275) (Yeast).